A 356-amino-acid chain; its full sequence is Putative methylthioribose-1-phosphate isomerase (356 aa).

Residues R57–A59, R100, and Q206 contribute to the substrate site. D247 (proton donor) is an active-site residue. A substrate-binding site is contributed by N257–K258.

It belongs to the eIF-2B alpha/beta/delta subunits family. MtnA subfamily.

It catalyses the reaction 5-(methylsulfanyl)-alpha-D-ribose 1-phosphate = 5-(methylsulfanyl)-D-ribulose 1-phosphate. Catalyzes the interconversion of methylthioribose-1-phosphate (MTR-1-P) into methylthioribulose-1-phosphate (MTRu-1-P). This is Putative methylthioribose-1-phosphate isomerase from Pyrococcus furiosus (strain ATCC 43587 / DSM 3638 / JCM 8422 / Vc1).